The chain runs to 355 residues: Peptide chain release factor 1 (355 aa).

The residue at position 230 (Gln230) is an N5-methylglutamine.

It belongs to the prokaryotic/mitochondrial release factor family. In terms of processing, methylated by PrmC. Methylation increases the termination efficiency of RF1.

It is found in the cytoplasm. Its function is as follows. Peptide chain release factor 1 directs the termination of translation in response to the peptide chain termination codons UAG and UAA. In Geobacter sulfurreducens (strain ATCC 51573 / DSM 12127 / PCA), this protein is Peptide chain release factor 1.